The primary structure comprises 416 residues: Glutamyl-tRNA reductase (416 aa).

Residues 49-52 (TCNR), serine 105, 110-112 (EPQ), and glutamine 116 contribute to the substrate site. The active-site Nucleophile is cysteine 50. 185–190 (GAGETI) contacts NADP(+).

This sequence belongs to the glutamyl-tRNA reductase family. In terms of assembly, homodimer.

The catalysed reaction is (S)-4-amino-5-oxopentanoate + tRNA(Glu) + NADP(+) = L-glutamyl-tRNA(Glu) + NADPH + H(+). It functions in the pathway porphyrin-containing compound metabolism; protoporphyrin-IX biosynthesis; 5-aminolevulinate from L-glutamyl-tRNA(Glu): step 1/2. In terms of biological role, catalyzes the NADPH-dependent reduction of glutamyl-tRNA(Glu) to glutamate 1-semialdehyde (GSA). The sequence is that of Glutamyl-tRNA reductase from Shewanella halifaxensis (strain HAW-EB4).